A 388-amino-acid polypeptide reads, in one-letter code: D-alanyl-D-alanine carboxypeptidase DacD (388 aa).

The N-terminal stretch at 1–21 (MKRRLIIAASLFVFNLSSGFA) is a signal peptide. Ser-63 functions as the Acyl-ester intermediate in the catalytic mechanism. Lys-66 functions as the Proton acceptor in the catalytic mechanism. The active site involves Ser-129. Residue Lys-232 participates in substrate binding.

The protein belongs to the peptidase S11 family.

It is found in the cell inner membrane. The catalysed reaction is Preferential cleavage: (Ac)2-L-Lys-D-Ala-|-D-Ala. Also transpeptidation of peptidyl-alanyl moieties that are N-acyl substituents of D-alanine.. It functions in the pathway cell wall biogenesis; peptidoglycan biosynthesis. Its function is as follows. Removes C-terminal D-alanyl residues from sugar-peptide cell wall precursors. This is D-alanyl-D-alanine carboxypeptidase DacD (dacD) from Escherichia coli (strain K12).